A 151-amino-acid chain; its full sequence is D-aminoacyl-tRNA deacylase (151 aa).

The Gly-cisPro motif, important for rejection of L-amino acids signature appears at 138–139 (GP).

This sequence belongs to the DTD family. As to quaternary structure, homodimer.

It localises to the cytoplasm. The catalysed reaction is glycyl-tRNA(Ala) + H2O = tRNA(Ala) + glycine + H(+). The enzyme catalyses a D-aminoacyl-tRNA + H2O = a tRNA + a D-alpha-amino acid + H(+). An aminoacyl-tRNA editing enzyme that deacylates mischarged D-aminoacyl-tRNAs. Also deacylates mischarged glycyl-tRNA(Ala), protecting cells against glycine mischarging by AlaRS. Acts via tRNA-based rather than protein-based catalysis; rejects L-amino acids rather than detecting D-amino acids in the active site. By recycling D-aminoacyl-tRNA to D-amino acids and free tRNA molecules, this enzyme counteracts the toxicity associated with the formation of D-aminoacyl-tRNA entities in vivo and helps enforce protein L-homochirality. This is D-aminoacyl-tRNA deacylase from Magnetococcus marinus (strain ATCC BAA-1437 / JCM 17883 / MC-1).